Reading from the N-terminus, the 634-residue chain is Coilin (634 aa).

3 disordered regions span residues 87–135 (VSPA…IAEN), 149–276 (PGPS…KLSQ), and 342–361 (GAKSDDTAKQFPSNGKDSTL). The segment covering 152-181 (SVQSKLLTNKGTPKAPETQTEVSNMSANIE) has biased composition (polar residues). 2 stretches are compositionally biased toward basic and acidic residues: residues 223-234 (TLKEGKMSESKN) and 251-272 (KENETREEQQDKTHLESNKIPD).

It belongs to the coilin family. As to expression, in egg chambers expressed in the follicle cells, nurse cells and oocyte. Expressed in the larval brain, salivary glands, fat bodies and in the somatic hub cells at the tip of the testis. Expressed in the spermatogonia and spermatocytes, and in the adult ejaculatory duct (at protein level). Expressed in the adult Malpighian tubules.

It is found in the nucleus. Its subcellular location is the nucleoplasm. It localises to the cajal body. The protein localises to the chromosome. The protein resides in the centromere. It is found in the cytoplasm. Its subcellular location is the cytoskeleton. It localises to the spindle. Functionally, component of nuclear coiled bodies, also known as Cajal bodies or CBs, which are involved in the modification and assembly of nucleoplasmic snRNPs. Required for Cajal body formation. The protein is Coilin of Drosophila melanogaster (Fruit fly).